A 409-amino-acid chain; its full sequence is Arginine biosynthesis bifunctional protein ArgJ (409 aa).

Residues Thr165, Lys191, Thr202, Glu282, Asn404, and Thr409 each contribute to the substrate site. Thr202 serves as the catalytic Nucleophile.

It belongs to the ArgJ family. Heterotetramer of two alpha and two beta chains.

It is found in the cytoplasm. It catalyses the reaction N(2)-acetyl-L-ornithine + L-glutamate = N-acetyl-L-glutamate + L-ornithine. The enzyme catalyses L-glutamate + acetyl-CoA = N-acetyl-L-glutamate + CoA + H(+). It participates in amino-acid biosynthesis; L-arginine biosynthesis; L-ornithine and N-acetyl-L-glutamate from L-glutamate and N(2)-acetyl-L-ornithine (cyclic): step 1/1. The protein operates within amino-acid biosynthesis; L-arginine biosynthesis; N(2)-acetyl-L-ornithine from L-glutamate: step 1/4. In terms of biological role, catalyzes two activities which are involved in the cyclic version of arginine biosynthesis: the synthesis of N-acetylglutamate from glutamate and acetyl-CoA as the acetyl donor, and of ornithine by transacetylation between N(2)-acetylornithine and glutamate. The sequence is that of Arginine biosynthesis bifunctional protein ArgJ from Parasynechococcus marenigrum (strain WH8102).